The chain runs to 224 residues: UPF0758 protein PSPTO_0086 (224 aa).

The 123-residue stretch at 102 to 224 folds into the MPN domain; it reads ALENPAQVRN…PLSMVEKGLM (123 aa). Zn(2+) contacts are provided by histidine 173, histidine 175, and aspartate 186. The short motif at 173-186 is the JAMM motif element; it reads HNHPSGITTPSRSD.

The protein belongs to the UPF0758 family.

In Pseudomonas syringae pv. tomato (strain ATCC BAA-871 / DC3000), this protein is UPF0758 protein PSPTO_0086.